Here is a 145-residue protein sequence, read N- to C-terminus: Superoxide dismutase [Mn/Fe] (145 aa).

Fe(3+)-binding residues include histidine 10 and histidine 64. 2 residues coordinate Mn(2+): histidine 10 and histidine 64.

It belongs to the iron/manganese superoxide dismutase family. Mn(2+) is required as a cofactor. It depends on Fe(3+) as a cofactor.

The enzyme catalyses 2 superoxide + 2 H(+) = H2O2 + O2. Destroys superoxide anion radicals which are normally produced within the cells and which are toxic to biological systems. Catalyzes the dismutation of superoxide anion radicals into O2 and H2O2 by successive reduction and oxidation of the transition metal ion at the active site. The polypeptide is Superoxide dismutase [Mn/Fe] (sodA) (Streptococcus parasanguinis).